A 224-amino-acid chain; its full sequence is MTINHFALNAVDRSAELQGKGASRRLRKQNLVPAIIYGGGEQPTAISIKINELVKSLEFEAFFSHILTLNVDGEEHQVVIKDLQRHPAKGFPMHADFQRVVKGQKINMNVPVHFSGREEAPGTKAGGVLSTLVTDIEIVCIPSQLPEYLEIDVSGMEIGDLFRLSDITLPEGVVIAELELEDGHDRTIVNMQPPTVEEVDEAAEVDAADVPATEQGTDESKDGE.

The interval 195–224 (TVEEVDEAAEVDAADVPATEQGTDESKDGE) is disordered. A compositionally biased stretch (acidic residues) spans 197–207 (EEVDEAAEVDA).

The protein belongs to the bacterial ribosomal protein bL25 family. CTC subfamily. As to quaternary structure, part of the 50S ribosomal subunit; part of the 5S rRNA/L5/L18/L25 subcomplex. Contacts the 5S rRNA. Binds to the 5S rRNA independently of L5 and L18.

This is one of the proteins that binds to the 5S RNA in the ribosome where it forms part of the central protuberance. The protein is Large ribosomal subunit protein bL25 of Psychrobacter cryohalolentis (strain ATCC BAA-1226 / DSM 17306 / VKM B-2378 / K5).